Here is a 231-residue protein sequence, read N- to C-terminus: uncharacterized protein (231 aa).

This is an uncharacterized protein from Methanocaldococcus jannaschii (strain ATCC 43067 / DSM 2661 / JAL-1 / JCM 10045 / NBRC 100440) (Methanococcus jannaschii).